Here is a 354-residue protein sequence, read N- to C-terminus: Vascular endothelial growth factor D (354 aa).

The signal sequence occupies residues 1–21; that stretch reads MYREWVVVNVFMMLYVQLVQG. The propeptide at 22-88 is or 99 (in a minor form); that stretch reads SSNEHGPVKR…SRSASHRSTR (67 aa). 3 cysteine pairs are disulfide-bonded: C111–C153, C142–C189, and C146–C191. N155 and N185 each carry an N-linked (GlcNAc...) asparagine glycan. The propeptide occupies 206 to 354; that stretch reads SIQIPEEDRC…AQGPHSRKNP (149 aa). One copy of the 1; approximate repeat lies at 222 to 237; that stretch reads CPIDMLWDSNKCKCVL. Positions 222–318 are 4 X 16 AA repeats of C-X(10)-C-X-C-X(1,3)-C; the sequence is CPIDMLWDSN…PDTCSCEDRC (97 aa). 3 consecutive repeat copies span residues 258 to 273, 277 to 293, and 301 to 318. N287 carries N-linked (GlcNAc...) asparagine glycosylation.

Belongs to the PDGF/VEGF growth factor family. In terms of assembly, homodimer; non-covalent and antiparallel. In terms of processing, undergoes a complex proteolytic maturation which generates a variety of processed secreted forms with increased activity toward VEGFR-3 and VEGFR-2. VEGF-D first form an antiparallel homodimer linked by disulfide bonds before secretion. The fully processed VEGF-D is composed mostly of two VEGF homology domains (VHDs) bound by non-covalent interactions. Highly expressed in lung, heart, small intestine and fetal lung, and at lower levels in skeletal muscle, colon, and pancreas.

It is found in the secreted. Growth factor active in angiogenesis, lymphangiogenesis and endothelial cell growth, stimulating their proliferation and migration and also has effects on the permeability of blood vessels. May function in the formation of the venous and lymphatic vascular systems during embryogenesis, and also in the maintenance of differentiated lymphatic endothelium in adults. Binds and activates VEGFR-2 (KDR/FLK1) and VEGFR-3 (FLT4) receptors. The protein is Vascular endothelial growth factor D of Homo sapiens (Human).